The chain runs to 432 residues: D-amino acid dehydrogenase (432 aa).

FAD is bound at residue 3-17; it reads VVILGSGVVGVTSAW.

It belongs to the DadA oxidoreductase family. FAD serves as cofactor.

It catalyses the reaction a D-alpha-amino acid + A + H2O = a 2-oxocarboxylate + AH2 + NH4(+). The protein operates within amino-acid degradation; D-alanine degradation; NH(3) and pyruvate from D-alanine: step 1/1. Functionally, oxidative deamination of D-amino acids. The chain is D-amino acid dehydrogenase from Salmonella paratyphi C (strain RKS4594).